A 414-amino-acid polypeptide reads, in one-letter code: Arginine deiminase (414 aa).

Catalysis depends on Cys402, which acts as the Amidino-cysteine intermediate.

It belongs to the arginine deiminase family.

The protein localises to the cytoplasm. The catalysed reaction is L-arginine + H2O = L-citrulline + NH4(+). The protein operates within amino-acid degradation; L-arginine degradation via ADI pathway; carbamoyl phosphate from L-arginine: step 1/2. The polypeptide is Arginine deiminase (Oenococcus oeni (strain ATCC BAA-331 / PSU-1)).